Reading from the N-terminus, the 169-residue chain is Putative phosphoesterase SAR0985 (169 aa).

The Proton donor role is filled by His34. Short sequence motifs (HXTX) lie at residues His34–Ile37 and His115–Ile118. His115 (proton acceptor) is an active-site residue.

Belongs to the 2H phosphoesterase superfamily. YjcG family.

The sequence is that of Putative phosphoesterase SAR0985 from Staphylococcus aureus (strain MRSA252).